We begin with the raw amino-acid sequence, 349 residues long: Phosphoribosylformylglycinamidine cyclo-ligase (349 aa).

This sequence belongs to the AIR synthase family.

The protein resides in the cytoplasm. The enzyme catalyses 2-formamido-N(1)-(5-O-phospho-beta-D-ribosyl)acetamidine + ATP = 5-amino-1-(5-phospho-beta-D-ribosyl)imidazole + ADP + phosphate + H(+). It functions in the pathway purine metabolism; IMP biosynthesis via de novo pathway; 5-amino-1-(5-phospho-D-ribosyl)imidazole from N(2)-formyl-N(1)-(5-phospho-D-ribosyl)glycinamide: step 2/2. The sequence is that of Phosphoribosylformylglycinamidine cyclo-ligase from Listeria monocytogenes serotype 4b (strain CLIP80459).